The following is a 200-amino-acid chain: Protein GrpE (200 aa).

Acidic residues predominate over residues 1 to 23; sequence MEEEIKETSEDKEEENTEAEAVE. The tract at residues 1-39 is disordered; sequence MEEEIKETSEDKEEENTEAEAVENNEKSEENAGNVEEDE.

It belongs to the GrpE family. In terms of assembly, homodimer.

The protein localises to the cytoplasm. Participates actively in the response to hyperosmotic and heat shock by preventing the aggregation of stress-denatured proteins, in association with DnaK and GrpE. It is the nucleotide exchange factor for DnaK and may function as a thermosensor. Unfolded proteins bind initially to DnaJ; upon interaction with the DnaJ-bound protein, DnaK hydrolyzes its bound ATP, resulting in the formation of a stable complex. GrpE releases ADP from DnaK; ATP binding to DnaK triggers the release of the substrate protein, thus completing the reaction cycle. Several rounds of ATP-dependent interactions between DnaJ, DnaK and GrpE are required for fully efficient folding. The protein is Protein GrpE of Brachyspira hyodysenteriae (strain ATCC 49526 / WA1).